A 523-amino-acid polypeptide reads, in one-letter code: Arabinose import ATP-binding protein AraG (523 aa).

ABC transporter domains are found at residues 20 to 255 (LAFR…MVGR) and 268 to 511 (IGSE…MLRT). An ATP-binding site is contributed by 52–59 (GENGAGKS).

It belongs to the ABC transporter superfamily. Arabinose importer (TC 3.A.1.2.2) family. The complex is composed of two ATP-binding proteins (AraG), two transmembrane proteins (AraH) and a solute-binding protein (AraF).

Its subcellular location is the cell inner membrane. It carries out the reaction L-arabinose(out) + ATP + H2O = L-arabinose(in) + ADP + phosphate + H(+). Its function is as follows. Part of the ABC transporter complex AraFGH involved in arabinose import. Responsible for energy coupling to the transport system. In Yersinia pestis bv. Antiqua (strain Antiqua), this protein is Arabinose import ATP-binding protein AraG.